The sequence spans 249 residues: Uridylate kinase (249 aa).

16 to 19 contributes to the ATP binding site; the sequence is KLSG. Glycine 57 contributes to the UMP binding site. ATP contacts are provided by glycine 58 and arginine 62. UMP contacts are provided by residues aspartate 77 and 138-145; that span reads AGMPYFST. Residues asparagine 166, tyrosine 172, and aspartate 175 each coordinate ATP.

The protein belongs to the UMP kinase family. In terms of assembly, homohexamer.

The protein resides in the cytoplasm. The catalysed reaction is UMP + ATP = UDP + ADP. It functions in the pathway pyrimidine metabolism; CTP biosynthesis via de novo pathway; UDP from UMP (UMPK route): step 1/1. Its activity is regulated as follows. Inhibited by UTP. Catalyzes the reversible phosphorylation of UMP to UDP. In Bifidobacterium adolescentis (strain ATCC 15703 / DSM 20083 / NCTC 11814 / E194a), this protein is Uridylate kinase.